Consider the following 457-residue polypeptide: UDP-glycosyltransferase 74C1 (457 aa).

UDP-alpha-D-glucose is bound by residues T281, 336–338 (VPQ), 353–361 (HCGWNSTLE), and 375–378 (WTDQ).

Belongs to the UDP-glycosyltransferase family.

The sequence is that of UDP-glycosyltransferase 74C1 (UGT74C1) from Arabidopsis thaliana (Mouse-ear cress).